The sequence spans 377 residues: Opsin-5 (377 aa).

Residues 1–33 are Extracellular-facing; the sequence is MALNHTALPQDERLPHYLRDEDPFASKLSWEAD. The N-linked (GlcNAc...) asparagine glycan is linked to N4. A helical transmembrane segment spans residues 34-54; that stretch reads LVAGFYLTIIGILSTFGNGYV. Residues 55-74 are Cytoplasmic-facing; that stretch reads LYMSSRRKKKLRPAEIMTIN. Residues 75–95 form a helical membrane-spanning segment; it reads LAVCDLGISVVGKPFTIISCF. Over 96–108 the chain is Extracellular; sequence CHRWVFGWFGCRW. C106 and C183 are disulfide-bonded. A helical transmembrane segment spans residues 109–129; sequence YGWAGFFFGCGSLITMTAVSL. Residues 130–150 are Cytoplasmic-facing; sequence DRYLKICYLSYGVWLKRKHAY. A helical membrane pass occupies residues 151–171; sequence ICLAVIWAYASFWTTMPLVGL. Topologically, residues 172–197 are extracellular; it reads GDYAPEPFGTSCTLDWWLAQASGGGQ. Residues 198–218 traverse the membrane as a helical segment; it reads VFILSILFFCLLLPTAVIVFS. At 219–252 the chain is on the cytoplasmic side; sequence YAKIIAKVKSSSKEVAHFDSRIHSSHVLEVKLTK. Residues 253 to 273 form a helical membrane-spanning segment; the sequence is VAMLICAGFLIAWIPYAVVSV. Residues 274–288 are Extracellular-facing; that stretch reads WSAFGRPDSIPIQLS. The chain crosses the membrane as a helical span at residues 289–309; it reads VVPTLLAKSAAMYNPIIYQVI. The residue at position 296 (K296) is an N6-(retinylidene)lysine. Residues 310–377 lie on the Cytoplasmic side of the membrane; sequence DYRFACCQAG…HSNDGDCGKK (68 aa). Residues C315 and C316 are each lipidated (S-palmitoyl cysteine). The disordered stretch occupies residues 357–377; that stretch reads FTSAHVMDGESHSNDGDCGKK. Residues 363–377 are compositionally biased toward basic and acidic residues; it reads MDGESHSNDGDCGKK.

The protein belongs to the G-protein coupled receptor 1 family. Opsin subfamily. Post-translationally, it is uncertain whether Cys-315 or Cys-316 is palmitoylated. Expressed in the brain (at protein level). Weakly expressed in the skin and liver (at protein level). Abundantly expressed in striated muscle cells. Expressed in Math7/Atok7-dependent retinal ganglion cells in the ganglion cell layer (at protein level). Additionally expressed in horizontal and amacrine cells in the inner nuclear layer of the retina (at protein level). Expressed around the base of hair follicles and in epidermal and sebaceous gland cells of the outer ear (at protein level). Abundantly expressed in vibrissae hair follicles and weakly expressed in the vibrissae skin pad, dorsal back skin, and tail.

It is found in the cell membrane. In terms of biological role, G-protein coupled receptor which selectively activates G(i) type G proteins via ultraviolet A (UVA) light-mediated activation in the retina. Preferentially binds the chromophore 11-cis retinal and is a bistable protein that displays emission peaks at 380 nm (UVA light) and 470 nm (blue light). Required for the light-response in the inner plexiform layer, and contributes to the regulation of the light-response in the nerve fiber layer, via phosphorylated DAT/SLC6A3 dopamine uptake. Involved in local corneal and retinal circadian rhythm photoentrainment via modulation of the UVA light-induced phase-shift of the retina clock. Acts as a circadian photoreceptor in the outer ear and vibrissal pads, via modulation of circadian clock-gene expression in response to violet light during the light-to-dark transition phase and night phase of the circadian cycle. Required in the retina to negatively regulate hyaloid vessel regression during postnatal development via light-dependent OPN5-SLC32A1-DRD2-VEGFR2 signaling. Involved in the light-dependent regulation of retina and vitreous compartment dopamine levels. In Mus musculus (Mouse), this protein is Opsin-5 (Opn5).